Here is a 405-residue protein sequence, read N- to C-terminus: N-methyltransferase nanE (405 aa).

S-adenosyl-L-methionine contacts are provided by residues 238-239 (GG), Asp-261, and 290-291 (HH).

It belongs to the class I-like SAM-binding methyltransferase superfamily. Cation-independent O-methyltransferase family.

It participates in secondary metabolite biosynthesis. N-methyltransferase; part of the gene cluster that mediates the biosynthesis of the benzazepine alkaloid nanangelenin A which contains an unprecedented 3,4-dihydro-1-benzazepine-2,5-dione-N-prenyl-N-acetoxy-anthranilamide scaffold. The first step of nanangelenin biosynthesis is catalyzed by the indoleamine 2,3-dioxygenase nanC which produces N-formyl-kynurenine through the catabolism of tryptophan. The two-module NRPS nanA then utilizes anthranilate (Ant) and L-kynurenine (L-Kyn) to assemble the dipeptide product nanangelenin B. The first adenylation domain of nanA (A1) loads anthranilate onto the T1 domain, while A2 loads kynurenine, generated through spontaneous nonenzymatic deformylation of the nanC-supplied N-formyl-kynurenine. The peptide bond formation between the tethered amino acids is catalyzed by the first condensation domain (C1) between anthranilate's carbonyl carbon and kynurenine's aliphatic primary amine. The second C domain (C2) catalyzes the final cyclization event between the aromatic amine of kynurenine and the tethered carbonyl carbon, yielding nanangelenin B. The terminal T3 domain enhances the catalytic efficiency of C2, suggesting the T2-tethered Ant-L-Kyn is transferred to T3 prior to cyclization by C2. Once released from nanA, nanangelenin B is then prenylated by the prenyltransferase nanD to form nanangelenin C. Nanangelenin C is then N-hydroxylated by the FAD-dependent monooxygenase nanF and further acetylated by the acetyltransferase nanB to yield nanangelenin F. Finally, the N-methyltransferase nanE methylates the amide nitrogen of 1-benzazepine to convert nanangelenin F into nanangelenin A. NanE is also able to methylate most of the intermediates of the pathway such as nanangelenin B and nanangelenin C to produce nanangelenin D and nanangelenin E, respectively. The sequence is that of N-methyltransferase nanE from Aspergillus nanangensis.